The following is a 76-amino-acid chain: MARYFRRRKFCRFTAENVTEIDYKDIVTLKNYVTESGKIVPSRITGTRAKYQRQLARAIKRARYLALLPYTDLHNK.

This sequence belongs to the bacterial ribosomal protein bS18 family. In terms of assembly, part of the 30S ribosomal subunit. Forms a tight heterodimer with protein bS6.

Functionally, binds as a heterodimer with protein bS6 to the central domain of the 16S rRNA, where it helps stabilize the platform of the 30S subunit. This Aeromonas salmonicida (strain A449) protein is Small ribosomal subunit protein bS18.